A 195-amino-acid polypeptide reads, in one-letter code: NAD(P)H-quinone oxidoreductase subunit J, chloroplastic (195 aa).

The protein belongs to the complex I 30 kDa subunit family. In terms of assembly, NDH is composed of at least 16 different subunits, 5 of which are encoded in the nucleus.

The protein resides in the plastid. Its subcellular location is the chloroplast thylakoid membrane. The catalysed reaction is a plastoquinone + NADH + (n+1) H(+)(in) = a plastoquinol + NAD(+) + n H(+)(out). It carries out the reaction a plastoquinone + NADPH + (n+1) H(+)(in) = a plastoquinol + NADP(+) + n H(+)(out). NDH shuttles electrons from NAD(P)H:plastoquinone, via FMN and iron-sulfur (Fe-S) centers, to quinones in the photosynthetic chain and possibly in a chloroplast respiratory chain. The immediate electron acceptor for the enzyme in this species is believed to be plastoquinone. Couples the redox reaction to proton translocation, and thus conserves the redox energy in a proton gradient. The polypeptide is NAD(P)H-quinone oxidoreductase subunit J, chloroplastic (Chlorokybus atmophyticus (Soil alga)).